A 644-amino-acid chain; its full sequence is Kelch-like protein 34 (644 aa).

The BTB domain maps to 29 to 96 (CDVTLETEGS…IYTAWLSLSM (68 aa)). The 108-residue stretch at 131 to 238 (CCFAANVAAR…PADVLRRVYS (108 aa)) folds into the BACK domain. The tract at residues 304 to 329 (AARGQVAAPEPEEEEEELEEEEEEEE) is disordered. A compositionally biased stretch (acidic residues) spans 313 to 329 (EPEEEEEELEEEEEEEE). Kelch repeat units lie at residues 320–366 (ELEE…TAGN), 367–425 (FLFV…AVGE), 426–473 (RLLA…VGDR), 475–526 (VVYI…VLRG), 528–571 (VFAF…VVEE), and 573–623 (ALLL…VLQL).

The chain is Kelch-like protein 34 (KLHL34) from Homo sapiens (Human).